Reading from the N-terminus, the 482-residue chain is tRNA sulfurtransferase (482 aa).

Residues Glu-61–Arg-165 form the THUMP domain. ATP contacts are provided by residues Leu-183–Ile-184, Lys-265, Gly-287, and Gln-296. Cys-344 and Cys-456 form a disulfide bridge. Residues Phe-404–Pro-482 enclose the Rhodanese domain. The active-site Cysteine persulfide intermediate is the Cys-456.

It belongs to the ThiI family.

Its subcellular location is the cytoplasm. It carries out the reaction [ThiI sulfur-carrier protein]-S-sulfanyl-L-cysteine + a uridine in tRNA + 2 reduced [2Fe-2S]-[ferredoxin] + ATP + H(+) = [ThiI sulfur-carrier protein]-L-cysteine + a 4-thiouridine in tRNA + 2 oxidized [2Fe-2S]-[ferredoxin] + AMP + diphosphate. The enzyme catalyses [ThiS sulfur-carrier protein]-C-terminal Gly-Gly-AMP + S-sulfanyl-L-cysteinyl-[cysteine desulfurase] + AH2 = [ThiS sulfur-carrier protein]-C-terminal-Gly-aminoethanethioate + L-cysteinyl-[cysteine desulfurase] + A + AMP + 2 H(+). Its pathway is cofactor biosynthesis; thiamine diphosphate biosynthesis. In terms of biological role, catalyzes the ATP-dependent transfer of a sulfur to tRNA to produce 4-thiouridine in position 8 of tRNAs, which functions as a near-UV photosensor. Also catalyzes the transfer of sulfur to the sulfur carrier protein ThiS, forming ThiS-thiocarboxylate. This is a step in the synthesis of thiazole, in the thiamine biosynthesis pathway. The sulfur is donated as persulfide by IscS. The sequence is that of tRNA sulfurtransferase from Pectobacterium atrosepticum (strain SCRI 1043 / ATCC BAA-672) (Erwinia carotovora subsp. atroseptica).